The primary structure comprises 217 residues: Probable transaldolase (217 aa).

K83 serves as the catalytic Schiff-base intermediate with substrate.

It belongs to the transaldolase family. Type 3B subfamily.

The protein resides in the cytoplasm. The enzyme catalyses D-sedoheptulose 7-phosphate + D-glyceraldehyde 3-phosphate = D-erythrose 4-phosphate + beta-D-fructose 6-phosphate. The protein operates within carbohydrate degradation; pentose phosphate pathway; D-glyceraldehyde 3-phosphate and beta-D-fructose 6-phosphate from D-ribose 5-phosphate and D-xylulose 5-phosphate (non-oxidative stage): step 2/3. In terms of biological role, transaldolase is important for the balance of metabolites in the pentose-phosphate pathway. The chain is Probable transaldolase from Pseudothermotoga lettingae (strain ATCC BAA-301 / DSM 14385 / NBRC 107922 / TMO) (Thermotoga lettingae).